A 379-amino-acid polypeptide reads, in one-letter code: Anhydro-N-acetylmuramic acid kinase (379 aa).

Residue 12-19 coordinates ATP; it reads GTSLDGMD.

The protein belongs to the anhydro-N-acetylmuramic acid kinase family.

It catalyses the reaction 1,6-anhydro-N-acetyl-beta-muramate + ATP + H2O = N-acetyl-D-muramate 6-phosphate + ADP + H(+). It participates in amino-sugar metabolism; 1,6-anhydro-N-acetylmuramate degradation. Its pathway is cell wall biogenesis; peptidoglycan recycling. Functionally, catalyzes the specific phosphorylation of 1,6-anhydro-N-acetylmuramic acid (anhMurNAc) with the simultaneous cleavage of the 1,6-anhydro ring, generating MurNAc-6-P. Is required for the utilization of anhMurNAc either imported from the medium or derived from its own cell wall murein, and thus plays a role in cell wall recycling. This is Anhydro-N-acetylmuramic acid kinase from Gloeobacter violaceus (strain ATCC 29082 / PCC 7421).